The following is a 438-amino-acid chain: 3-phosphoshikimate 1-carboxyvinyltransferase (438 aa).

Residues Lys-20, Ser-21, and Arg-25 each contribute to the 3-phosphoshikimate site. Phosphoenolpyruvate is bound at residue Lys-20. Phosphoenolpyruvate contacts are provided by Gly-90 and Arg-118. Positions 163, 164, 165, 191, 320, and 347 each coordinate 3-phosphoshikimate. Residue Gln-165 coordinates phosphoenolpyruvate. Asp-320 acts as the Proton acceptor in catalysis. Phosphoenolpyruvate is bound by residues Arg-351 and Arg-392.

Belongs to the EPSP synthase family. Monomer.

It localises to the cytoplasm. It catalyses the reaction 3-phosphoshikimate + phosphoenolpyruvate = 5-O-(1-carboxyvinyl)-3-phosphoshikimate + phosphate. It functions in the pathway metabolic intermediate biosynthesis; chorismate biosynthesis. Functionally, catalyzes the transfer of the enolpyruvyl moiety of phosphoenolpyruvate (PEP) to the 5-hydroxyl of shikimate-3-phosphate (S3P) to produce enolpyruvyl shikimate-3-phosphate and inorganic phosphate. The chain is 3-phosphoshikimate 1-carboxyvinyltransferase from Natronomonas pharaonis (strain ATCC 35678 / DSM 2160 / CIP 103997 / JCM 8858 / NBRC 14720 / NCIMB 2260 / Gabara) (Halobacterium pharaonis).